The sequence spans 206 residues: Cytochrome b6-f complex iron-sulfur subunit, chloroplastic (206 aa).

The transit peptide at 1–29 (MAMITSRRAAAPCKAQATRRSRVMSVVRA) directs the protein to the chloroplast. A helical transmembrane segment spans residues 48–68 (ILLGGASLPVGSLALGYGAFF). Positions 92-188 (ANAWLATHQK…CDVQEDGLVT (97 aa)) constitute a Rieske domain. Residues cysteine 134, histidine 136, cysteine 152, and histidine 155 each contribute to the [2Fe-2S] cluster site. Cysteine 139 and cysteine 154 are joined by a disulfide.

This sequence belongs to the Rieske iron-sulfur protein family. In terms of assembly, the 4 large subunits of the cytochrome b6-f complex are cytochrome b6, subunit IV (17 kDa polypeptide, petD), cytochrome f and the Rieske protein, while the 4 small subunits are petG, petL, petM and petN. The complex functions as a dimer. It depends on [2Fe-2S] cluster as a cofactor.

The protein localises to the plastid. It localises to the chloroplast thylakoid membrane. It carries out the reaction 2 oxidized [plastocyanin] + a plastoquinol + 2 H(+)(in) = 2 reduced [plastocyanin] + a plastoquinone + 4 H(+)(out). Component of the cytochrome b6-f complex, which mediates electron transfer between photosystem II (PSII) and photosystem I (PSI), cyclic electron flow around PSI, and state transitions. This is Cytochrome b6-f complex iron-sulfur subunit, chloroplastic (petC) from Volvox carteri (Green alga).